The chain runs to 347 residues: Dihydroorotase (347 aa).

2 residues coordinate Zn(2+): His-17 and His-19. Substrate is bound by residues 19-21 (HLR) and Asn-45. The Zn(2+) site is built by Lys-103, His-140, and His-178. Lys-103 carries the N6-carboxylysine modification. His-140 serves as a coordination point for substrate. Leu-223 contributes to the substrate binding site. Residue Asp-251 coordinates Zn(2+). Asp-251 is an active-site residue. Substrate contacts are provided by His-255 and Ala-267.

It belongs to the metallo-dependent hydrolases superfamily. DHOase family. Class II DHOase subfamily. Homodimer. The cofactor is Zn(2+).

It catalyses the reaction (S)-dihydroorotate + H2O = N-carbamoyl-L-aspartate + H(+). It participates in pyrimidine metabolism; UMP biosynthesis via de novo pathway; (S)-dihydroorotate from bicarbonate: step 3/3. Functionally, catalyzes the reversible cyclization of carbamoyl aspartate to dihydroorotate. The polypeptide is Dihydroorotase (Citrobacter koseri (strain ATCC BAA-895 / CDC 4225-83 / SGSC4696)).